We begin with the raw amino-acid sequence, 3414 residues long: Genome polyprotein (3414 aa).

The tract at residues 1–30 (MVKKAILKGKGGGPPRRVSKETATKTRQPR) is disordered. Topologically, residues 1-98 (MVKKAILKGK…LQKRGKRRSA (98 aa)) are cytoplasmic. Positions 97 to 117 (SATDWMSWLLVITLLGMTIAA) are cleaved as a propeptide — ER anchor for the capsid protein C, removed in mature form by serine protease NS3. Residues 99–119 (TDWMSWLLVITLLGMTIAATV) traverse the membrane as a helical segment. Over 120-242 (RKERDGSTVI…HLTRVEGWVW (123 aa)) the chain is Extracellular. Asparagine 144 carries N-linked (GlcNAc...) asparagine; by host glycosylation. Residues 243–260 (KNRLLALAMVTVVWLTLE) form a helical membrane-spanning segment. Position 261 (serine 261) is a topological domain, cytoplasmic. Residues 262 to 280 (VVTRVAVLVVLLCLAPVYA) form a helical membrane-spanning segment. The Extracellular portion of the chain corresponds to 281 to 727 (SRCTHLENRD…HTVLGGAFNS (447 aa)). Disulfide bonds link cysteine 283–cysteine 310, cysteine 340–cysteine 396, cysteine 340–cysteine 401, cysteine 354–cysteine 385, cysteine 372–cysteine 396, and cysteine 372–cysteine 401. A fusion peptide region spans residues 378-391 (DRGWGNHCGLFGKG). An N-linked (GlcNAc...) asparagine; by host glycan is attached at asparagine 434. 2 disulfide bridges follow: cysteine 466-cysteine 570 and cysteine 587-cysteine 618. The helical transmembrane segment at 728-748 (IFGGVGFLPKLLLGVALAWLG) threads the bilayer. The Extracellular portion of the chain corresponds to 749–755 (LNMRNPT). A helical transmembrane segment spans residues 756–776 (MSMSFLLAGVLVLAMTLGVGA). The Extracellular segment spans residues 777 to 1132 (DVGCAVDTER…RSMVVADNGE (356 aa)). 6 cysteine pairs are disulfide-bonded: cysteine 780–cysteine 791, cysteine 831–cysteine 920, cysteine 955–cysteine 1000, cysteine 1057–cysteine 1106, cysteine 1068–cysteine 1090, and cysteine 1089–cysteine 1093. N-linked (GlcNAc...) asparagine; by host glycans are attached at residues asparagine 861, asparagine 983, and asparagine 999. The helical transmembrane segment at 1133–1153 (LLSEGGVPGIVALFVVLEYII) threads the bilayer. Topologically, residues 1154–1158 (RRRPS) are cytoplasmic. A helical membrane pass occupies residues 1159-1179 (TGSTVVWGGIVVLALLVTGMV). At 1180 to 1187 (RMESLVRY) the chain is on the lumenal side. The chain crosses the membrane as a helical span at residues 1188–1208 (VVAVGITFHLELGPEIVALML). Topologically, residues 1209–1293 (LQAVFELRVG…LLMALMTQQD (85 aa)) are cytoplasmic. Residues 1294–1314 (VVTVHHGLVCFLSAASACSIW) form a helical membrane-spanning segment. Topologically, residues 1315 to 1327 (RLLRGHREQKGLT) are lumenal. Residues 1328–1348 (WIVPLARLLGGEGSGIRLLAF) form a helical membrane-spanning segment. The Cytoplasmic segment spans residues 1349-1359 (WELSAHRGRRS). A helical transmembrane segment spans residues 1360 to 1377 (FSEPLTVVGVMLTLASGM). Over 1378-1382 (MRHTS) the chain is Lumenal. Residues 1383-1403 (QEALCALAVASFLLLMLVLGT) traverse the membrane as a helical segment. At 1404–1454 (RKMQLVAEWSGCVEWHPELVNEGGEVSLRVRQDAMGNFHLTELEKEERMMA) the chain is on the cytoplasmic side. Positions 1410–1449 (AEWSGCVEWHPELVNEGGEVSLRVRQDAMGNFHLTELEKE) are interacts with and activates NS3 protease. An intramembrane region (helical) is located at residues 1455–1475 (FWLIAGLAASAIHWSGIIGVM). Residues 1476–2160 (GLWTLTKMLR…RMAERDAPEA (685 aa)) are Cytoplasmic-facing. Positions 1490–1669 (SDLVFSGQGG…EAEKSRPNLP (180 aa)) constitute a Peptidase S7 domain. Residues histidine 1543, aspartate 1567, and serine 1627 each act as charge relay system; for serine protease NS3 activity in the active site. A Helicase ATP-binding domain is found at 1675 to 1831 (TGWTSKGQIT…ESNGAITSEE (157 aa)). 1688–1695 (MHPGSGKT) serves as a coordination point for ATP. Positions 1779–1782 (DEAH) match the DEAH box motif. In terms of domain architecture, Helicase C-terminal spans 1841–2000 (DGFDWITEYE…TLRGPVATFY (160 aa)). Residue lysine 1883 is modified to N6-acetyllysine; by host. Residues 2161-2181 (FLTMVEMMVLGLATLGVIWCF) form a helical membrane-spanning segment. Topologically, residues 2182-2189 (VVRTSISR) are lumenal. Residues 2190-2210 (MMLGTLVLLASLLLLWAGGVG) constitute an intramembrane region (helical). Residue tyrosine 2211 is a topological domain, lumenal. A helical transmembrane segment spans residues 2212 to 2232 (GNMAGVALIFYTLLTVLQPEA). Residues 2233–2244 (GKQRSSDDNKLA) are Cytoplasmic-facing. The helical transmembrane segment at 2245–2265 (YFLLTLCSLAGLVAANEMGFL) threads the bilayer. At 2266-2299 (EKTKADLSTVLWSEREEPRPWSEWTNVDIQPARS) the chain is on the lumenal side. The segment at residues 2300 to 2320 (WGTYVLVVSLFTPYIIHQLQT) is an intramembrane region (helical). Over 2321–2343 (KIQQLVNSAVASGAQAMRDLGGG) the chain is Lumenal. An intramembrane region (helical) is located at residues 2344-2364 (APFFGVAGHVMTLGVVSLIGA). Topologically, residues 2365–2368 (TPTS) are lumenal. The chain crosses the membrane as a helical span at residues 2369-2389 (LMVGVGLAALHLAIVVSGLEA). Topologically, residues 2390-2432 (ELTQRAHKVFFSAMVRNPMVDGDVINPFGEGEAKPALYERRMS) are cytoplasmic. A helical transmembrane segment spans residues 2433-2453 (LVLAIVLCLMSVVMNRTVASI). Residues 2454-2477 (TEASAVGLAAAGQLLRPEADTLWT) are Lumenal-facing. The chain crosses the membrane as a helical span at residues 2478 to 2498 (MPVACGMSGVVRGSLWGFLPL). Over 2499–3414 (GHRLWLRASG…WELRLESSII (916 aa)) the chain is Cytoplasmic. In terms of domain architecture, mRNA cap 0-1 NS5-type MT spans 2512 to 2776 (GGSEGDTLGD…ELDLGVGTRC (265 aa)). Serine 2567 contributes to the S-adenosyl-L-methionine binding site. Phosphoserine is present on serine 2567. Lysine 2572 (for 2'-O-MTase activity) is an active-site residue. Positions 2597, 2598, 2615, 2616, 2642, and 2643 each coordinate S-adenosyl-L-methionine. Aspartate 2657 functions as the For 2'-O-MTase activity in the catalytic mechanism. Isoleucine 2658 provides a ligand contact to S-adenosyl-L-methionine. Active-site for 2'-O-MTase activity residues include lysine 2694 and glutamate 2730. Residues 2730-2734 (EMYYS) are interaction with host SCRIB. Tyrosine 2732 is a binding site for S-adenosyl-L-methionine. Zn(2+)-binding residues include glutamate 2950, histidine 2954, cysteine 2959, and cysteine 2962. The RdRp catalytic domain occupies 3040 to 3189 (GLFYADDTAG…RPLDDRFGKA (150 aa)). Residues histidine 3224, cysteine 3240, and cysteine 3359 each coordinate Zn(2+).

It in the N-terminal section; belongs to the class I-like SAM-binding methyltransferase superfamily. mRNA cap 0-1 NS5-type methyltransferase family. As to quaternary structure, homodimer. Interacts (via N-terminus) with host EXOC1 (via C-terminus); this interaction results in EXOC1 degradation through the proteasome degradation pathway. Forms heterodimers with envelope protein E in the endoplasmic reticulum and Golgi. In terms of assembly, homodimer; in the endoplasmic reticulum and Golgi. Interacts with protein prM. Interacts with non-structural protein 1. As to quaternary structure, homodimer; Homohexamer when secreted. Interacts with envelope protein E. Interacts (via N-terminus) with serine protease NS3. In terms of assembly, forms a heterodimer with serine protease NS3. May form homooligomers. As to quaternary structure, forms a heterodimer with NS2B. Interacts with NS4B. Interacts with unphosphorylated RNA-directed RNA polymerase NS5; this interaction stimulates RNA-directed RNA polymerase NS5 guanylyltransferase activity. Interacts with serine protease NS3. In terms of assembly, homodimer. Interacts with host STAT2; this interaction inhibits the phosphorylation of the latter, and, when all viral proteins are present (polyprotein), targets STAT2 for degradation. Interacts with serine protease NS3. Interacts with host SCRIB; this interaction targets NS5 to the cell membrane periphery and nucleus, thereby allowing efficient host nuclear STAT1 inhibition. In terms of processing, specific enzymatic cleavages in vivo yield mature proteins. Cleavages in the lumen of endoplasmic reticulum are performed by host signal peptidase, whereas cleavages in the cytoplasmic side are performed by serine protease NS3. Signal cleavage at the 2K-4B site requires a prior NS3 protease-mediated cleavage at the 4A-2K site. Post-translationally, cleaved in post-Golgi vesicles by a host furin, releasing the mature small envelope protein M, and peptide pr. This cleavage is incomplete as up to 30% of viral particles still carry uncleaved prM. N-glycosylated. In terms of processing, N-glycosylated. The excreted form is glycosylated and this is required for efficient secretion of the protein from infected cells. Post-translationally, acetylated by host KAT5. Acetylation modulates NS3 RNA-binding and unwinding activities and plays an important positive role for viral replication. Phosphorylated on serines residues. This phosphorylation may trigger NS5 nuclear localization.

The protein localises to the virion. It localises to the host nucleus. Its subcellular location is the host cytoplasm. The protein resides in the host perinuclear region. It is found in the secreted. The protein localises to the virion membrane. It localises to the host endoplasmic reticulum membrane. The catalysed reaction is Selective hydrolysis of -Xaa-Xaa-|-Yaa- bonds in which each of the Xaa can be either Arg or Lys and Yaa can be either Ser or Ala.. It carries out the reaction RNA(n) + a ribonucleoside 5'-triphosphate = RNA(n+1) + diphosphate. The enzyme catalyses a ribonucleoside 5'-triphosphate + H2O = a ribonucleoside 5'-diphosphate + phosphate + H(+). It catalyses the reaction ATP + H2O = ADP + phosphate + H(+). The catalysed reaction is a 5'-end (5'-triphosphoguanosine)-ribonucleoside in mRNA + S-adenosyl-L-methionine = a 5'-end (N(7)-methyl 5'-triphosphoguanosine)-ribonucleoside in mRNA + S-adenosyl-L-homocysteine. It carries out the reaction a 5'-end (N(7)-methyl 5'-triphosphoguanosine)-ribonucleoside in mRNA + S-adenosyl-L-methionine = a 5'-end (N(7)-methyl 5'-triphosphoguanosine)-(2'-O-methyl-ribonucleoside) in mRNA + S-adenosyl-L-homocysteine + H(+). Functionally, plays a role in virus budding by binding to the cell membrane and gathering the viral RNA into a nucleocapsid that forms the core of a mature virus particle. During virus entry, may induce genome penetration into the host cytoplasm after hemifusion induced by the surface proteins. Can migrate to the cell nucleus where it modulates host functions. Inhibits RNA silencing by interfering with host Dicer. In terms of biological role, prevents premature fusion activity of envelope proteins in trans-Golgi by binding to envelope protein E at pH6.0. After virion release in extracellular space, gets dissociated from E dimers. Its function is as follows. Acts as a chaperone for envelope protein E during intracellular virion assembly by masking and inactivating envelope protein E fusion peptide. prM is the only viral peptide matured by host furin in the trans-Golgi network probably to avoid catastrophic activation of the viral fusion activity in acidic Golgi compartment prior to virion release. prM-E cleavage is inefficient, and many virions are only partially matured. These uncleaved prM would play a role in immune evasion. Functionally, may play a role in virus budding. Exerts cytotoxic effects by activating a mitochondrial apoptotic pathway through M ectodomain. May display a viroporin activity. Binds to host cell surface receptor and mediates fusion between viral and cellular membranes. Envelope protein is synthesized in the endoplasmic reticulum in the form of heterodimer with protein prM. They play a role in virion budding in the ER, and the newly formed immature particle is covered with 60 spikes composed of heterodimer between precursor prM and envelope protein E. The virion is transported to the Golgi apparatus where the low pH causes dissociation of PrM-E heterodimers and formation of E homodimers. prM-E cleavage is inefficient, and many virions are only partially matured. These uncleaved prM would play a role in immune evasion. In terms of biological role, involved in immune evasion, pathogenesis and viral replication. Once cleaved off the polyprotein, is targeted to three destinations: the viral replication cycle, the plasma membrane and the extracellular compartment. Essential for viral replication. Required for formation of the replication complex and recruitment of other non-structural proteins to the ER-derived membrane structures. Excreted as a hexameric lipoparticle that plays a role against host immune response. Antagonizing the complement function. Binds to the host macrophages and dendritic cells. Inhibits signal transduction originating from Toll-like receptor 3 (TLR3). Its function is as follows. Component of the viral RNA replication complex that functions in virion assembly and antagonizes the host immune response. Functionally, required cofactor for the serine protease function of NS3. May have membrane-destabilizing activity and form viroporins. Displays three enzymatic activities: serine protease, NTPase and RNA helicase. NS3 serine protease, in association with NS2B, performs its autocleavage and cleaves the polyprotein at dibasic sites in the cytoplasm: C-prM, NS2A-NS2B, NS2B-NS3, NS3-NS4A, NS4A-2K and NS4B-NS5. NS3 RNA helicase binds RNA and unwinds dsRNA in the 3' to 5' direction. In terms of biological role, regulates the ATPase activity of the NS3 helicase activity. NS4A allows NS3 helicase to conserve energy during unwinding. Its function is as follows. Functions as a signal peptide for NS4B and is required for the interferon antagonism activity of the latter. Functionally, induces the formation of ER-derived membrane vesicles where the viral replication takes place. Inhibits interferon (IFN)-induced host STAT1 phosphorylation and nuclear translocation, thereby preventing the establishment of cellular antiviral state by blocking the IFN-alpha/beta pathway. Inhibits STAT2 translocation in the nucleus after IFN-alpha treatment. Replicates the viral (+) and (-) genome, and performs the capping of genomes in the cytoplasm. NS5 methylates viral RNA cap at guanine N-7 and ribose 2'-O positions. Besides its role in genome replication, also prevents the establishment of cellular antiviral state by blocking the interferon-alpha/beta (IFN-alpha/beta) signaling pathway. Inhibits host TYK2 and STAT2 phosphorylation, thereby preventing activation of JAK-STAT signaling pathway. The sequence is that of Genome polyprotein from Tick-borne encephalitis virus (strain Hypr) (TBEV).